The following is a 471-amino-acid chain: Phosphatidylinositol 4-kinase type 2-alpha (471 aa).

2 disordered regions span residues 1 to 25 (MDETSPLVSPDRDQTDYSYQSQCSP) and 48 to 101 (PGSA…PDDP). The segment covering 90 to 101 (AERERNKFPDDP) has biased composition (basic and acidic residues). The PI3K/PI4K catalytic domain occupies 117–445 (DILPERISQG…VQTPPVIVET (329 aa)). Residues 123 to 129 (ISQGSSG) are G-loop. Residues 124-130 (SQGSSGS) and Lys145 contribute to the ATP site. The interval 150–152 (EPY) is important for substrate binding. The interval 158 to 171 (KWTKWLQKLCCPCC) is important for interaction with membranes. 4 S-palmitoyl cysteine lipidation sites follow: Cys167, Cys168, Cys170, and Cys171. 254-257 (QLFV) lines the ATP pocket. The interval 261–269 (KDADYWLRR) is important for interaction with membranes. The segment at 298 to 306 (RNTDRGNDN) is catalytic loop. The tract at residues 336–356 (AIDNGLAFPLKHPDSWRAYPF) is activation loop. Asp338 contacts ATP. The interval 351 to 360 (WRAYPFYWAW) is important for interaction with membranes.

Belongs to the PI3/PI4-kinase family. Type II PI4K subfamily.

The protein resides in the golgi apparatus. It localises to the trans-Golgi network membrane. The protein localises to the membrane raft. It is found in the endosome. Its subcellular location is the endosome membrane. The protein resides in the cytoplasmic vesicle. It localises to the cell projection. The protein localises to the dendrite. It is found in the presynaptic cell membrane. Its subcellular location is the synapse. The protein resides in the synaptosome. It localises to the mitochondrion. The protein localises to the membrane. It is found in the cell membrane. Its subcellular location is the perikaryon. The protein resides in the neuron projection. The catalysed reaction is a 1,2-diacyl-sn-glycero-3-phospho-(1D-myo-inositol) + ATP = a 1,2-diacyl-sn-glycero-3-phospho-(1D-myo-inositol 4-phosphate) + ADP + H(+). Membrane-bound phosphatidylinositol-4 kinase (PI4-kinase) that catalyzes the phosphorylation of phosphatidylinositol (PI) to phosphatidylinositol 4-phosphate (PI4P), a lipid that plays important roles in endocytosis, Golgi function, protein sorting and membrane trafficking. Besides, phosphorylation of phosphatidylinositol (PI) to phosphatidylinositol 4-phosphate (PI4P) is the first committed step in the generation of phosphatidylinositol 4,5-bisphosphate (PIP2), a precursor of the second messenger inositol 1,4,5-trisphosphate (InsP3). In Xenopus tropicalis (Western clawed frog), this protein is Phosphatidylinositol 4-kinase type 2-alpha (pi4k2a).